A 172-amino-acid chain; its full sequence is ATP synthase subunit b (172 aa).

The helical transmembrane segment at 5-24 (LLMLLLLGSVSLFANEAAAS) threads the bilayer.

This sequence belongs to the ATPase B chain family. In terms of assembly, F-type ATPases have 2 components, F(1) - the catalytic core - and F(0) - the membrane proton channel. F(1) has five subunits: alpha(3), beta(3), gamma(1), delta(1), epsilon(1). F(0) has three main subunits: a(1), b(2) and c(10-14). The alpha and beta chains form an alternating ring which encloses part of the gamma chain. F(1) is attached to F(0) by a central stalk formed by the gamma and epsilon chains, while a peripheral stalk is formed by the delta and b chains.

The protein resides in the cell inner membrane. In terms of biological role, f(1)F(0) ATP synthase produces ATP from ADP in the presence of a proton or sodium gradient. F-type ATPases consist of two structural domains, F(1) containing the extramembraneous catalytic core and F(0) containing the membrane proton channel, linked together by a central stalk and a peripheral stalk. During catalysis, ATP synthesis in the catalytic domain of F(1) is coupled via a rotary mechanism of the central stalk subunits to proton translocation. Functionally, component of the F(0) channel, it forms part of the peripheral stalk, linking F(1) to F(0). The sequence is that of ATP synthase subunit b from Nitratiruptor sp. (strain SB155-2).